The chain runs to 88 residues: Small ribosomal subunit protein bS16 (88 aa).

This sequence belongs to the bacterial ribosomal protein bS16 family.

In Halothermothrix orenii (strain H 168 / OCM 544 / DSM 9562), this protein is Small ribosomal subunit protein bS16.